The following is a 344-amino-acid chain: GDSL esterase/lipase At2g19010 (344 aa).

Positions 1–21 (MSKACWLVAAIIFTAATVVYG) are cleaved as a signal peptide. Catalysis depends on Ser-33, which acts as the Nucleophile. A glycan (N-linked (GlcNAc...) asparagine) is linked at Asn-303. Active-site residues include Asp-311 and His-314.

The protein belongs to the 'GDSL' lipolytic enzyme family.

Its subcellular location is the secreted. The polypeptide is GDSL esterase/lipase At2g19010 (Arabidopsis thaliana (Mouse-ear cress)).